A 421-amino-acid polypeptide reads, in one-letter code: Histidine--tRNA ligase (421 aa).

The protein belongs to the class-II aminoacyl-tRNA synthetase family. In terms of assembly, homodimer.

The protein localises to the cytoplasm. It carries out the reaction tRNA(His) + L-histidine + ATP = L-histidyl-tRNA(His) + AMP + diphosphate + H(+). In Alkaliphilus oremlandii (strain OhILAs) (Clostridium oremlandii (strain OhILAs)), this protein is Histidine--tRNA ligase.